A 657-amino-acid polypeptide reads, in one-letter code: PAN2-PAN3 deadenylation complex subunit PAN3 (657 aa).

3 disordered regions span residues 1 to 29 (MASAGKPNIDDGRRGTSSPKLKGRDHAKD), 52 to 98 (HDPS…SATI), and 115 to 135 (SRSNAATPQSQPETSTPEWSI). The C3H1-type zinc finger occupies 27–55 (AKDTLCRNVTIYGRCRYEDKGCVFNHDPS). Basic and acidic residues predominate over residues 52–67 (HDPSRVNDAQHPERSS). 2 stretches are compositionally biased toward polar residues: residues 75–98 (DSPSFTPSATPLNGSSGLKKSATI) and 115–132 (SRSNAATPQSQPETSTPE). The pseudokinase domain stretch occupies residues 259 to 521 (QTLPNSQLPT…TIDIFISGIS (263 aa)). ATP contacts are provided by residues R311, 360-367 (DYHPLSKT), and 421-422 (SK). Positions 522–560 (SQLMSTFDSSLHLDDQLISDLSRELENARLVRLLTKLNF) form a coiled coil. The interval 561–657 (INERPEYEHD…QALLKPARRI (97 aa)) is knob domain.

It belongs to the protein kinase superfamily. PAN3 family. In terms of assembly, homodimer. Forms a heterotrimer with a catalytic subunit PAN2 to form the poly(A)-nuclease (PAN) deadenylation complex. Interacts (via PAM-2 motif) with poly(A)-binding protein PAB1 (via PABC domain), conferring substrate specificity of the enzyme complex.

It localises to the cytoplasm. In terms of biological role, regulatory subunit of the poly(A)-nuclease (PAN) deadenylation complex, one of two cytoplasmic mRNA deadenylases involved in mRNA turnover. PAN specifically shortens poly(A) tails of RNA and the activity is stimulated by poly(A)-binding protein PAB1. PAN deadenylation is followed by rapid degradation of the shortened mRNA tails by the CCR4-NOT complex. Deadenylated mRNAs are then degraded by two alternative mechanisms, namely exosome-mediated 3'-5' exonucleolytic degradation, or deadenylation-dependent mRNA decaping and subsequent 5'-3' exonucleolytic degradation by XRN1. May also be involved in post-transcriptional maturation of mRNA poly(A) tails. PAN3 acts as a positive regulator for PAN activity, recruiting the catalytic subunit PAN2 to mRNA via its interaction with RNA and with PAB1. This chain is PAN2-PAN3 deadenylation complex subunit PAN3, found in Coccidioides immitis (strain RS) (Valley fever fungus).